The sequence spans 443 residues: Serine/threonine-protein kinase ISR1 (443 aa).

In terms of domain architecture, Protein kinase spans 135 to 415 (LPSNKLVGQG…LRNDLFQDWK (281 aa)). ATP is bound by residues 141 to 149 (VGQGSYSYV) and lysine 169. Aspartate 280 (proton acceptor) is an active-site residue.

It belongs to the protein kinase superfamily. Ser/Thr protein kinase family.

It catalyses the reaction L-seryl-[protein] + ATP = O-phospho-L-seryl-[protein] + ADP + H(+). The catalysed reaction is L-threonyl-[protein] + ATP = O-phospho-L-threonyl-[protein] + ADP + H(+). Probable serine/threonine protein kinase which may function redundantly with MPK1-independent branch of the PCK1 pathway that is presumed to be required for the tolerance to high temperatures and staurosporine. The chain is Serine/threonine-protein kinase ISR1 (ISR1) from Saccharomyces cerevisiae (strain ATCC 204508 / S288c) (Baker's yeast).